The chain runs to 396 residues: NADH-quinone oxidoreductase subunit D (396 aa).

It belongs to the complex I 49 kDa subunit family. In terms of assembly, NDH-1 is composed of 14 different subunits. Subunits NuoB, C, D, E, F, and G constitute the peripheral sector of the complex.

Its subcellular location is the cell inner membrane. The catalysed reaction is a quinone + NADH + 5 H(+)(in) = a quinol + NAD(+) + 4 H(+)(out). Functionally, NDH-1 shuttles electrons from NADH, via FMN and iron-sulfur (Fe-S) centers, to quinones in the respiratory chain. The immediate electron acceptor for the enzyme in this species is believed to be ubiquinone. Couples the redox reaction to proton translocation (for every two electrons transferred, four hydrogen ions are translocated across the cytoplasmic membrane), and thus conserves the redox energy in a proton gradient. This is NADH-quinone oxidoreductase subunit D from Brucella canis (strain ATCC 23365 / NCTC 10854 / RM-666).